Reading from the N-terminus, the 250-residue chain is 2,3-bisphosphoglycerate-dependent phosphoglycerate mutase (250 aa).

Substrate-binding positions include 10–17 (RHGESQWN), 23–24 (TG), arginine 62, 89–92 (ERHY), lysine 100, 116–117 (RR), and 185–186 (GN). Histidine 11 (tele-phosphohistidine intermediate) is an active-site residue. Residue glutamate 89 is the Proton donor/acceptor of the active site.

The protein belongs to the phosphoglycerate mutase family. BPG-dependent PGAM subfamily. As to quaternary structure, homodimer.

It carries out the reaction (2R)-2-phosphoglycerate = (2R)-3-phosphoglycerate. Its pathway is carbohydrate degradation; glycolysis; pyruvate from D-glyceraldehyde 3-phosphate: step 3/5. Functionally, catalyzes the interconversion of 2-phosphoglycerate and 3-phosphoglycerate. This Salmonella paratyphi A (strain ATCC 9150 / SARB42) protein is 2,3-bisphosphoglycerate-dependent phosphoglycerate mutase.